A 359-amino-acid chain; its full sequence is Transcription elongation factor A N-terminal and central domain-containing protein (359 aa).

One can recognise a TFIIS N-terminal domain in the interval M1–T82. Residues C84–S118 form a disordered region. Residues A104 to S118 show a composition bias toward polar residues. A TFIIS central domain is found at V182–G298.

The polypeptide is Transcription elongation factor A N-terminal and central domain-containing protein (Tceanc) (Mus musculus (Mouse)).